A 137-amino-acid chain; its full sequence is Thionin BTH7 (137 aa).

An N-terminal signal peptide occupies residues 1 to 28; the sequence is MATNKSIKSVVICVLILGLVLEQVQVEG. 4 disulfides stabilise this stretch: Cys31–Cys68, Cys32–Cys60, Cys40–Cys58, and Cys44–Cys54. Residues 75–137 constitute a propeptide, acidic domain; the sequence is LNLLPESGEP…DGEVIQSVEA (63 aa).

The protein belongs to the plant thionin (TC 1.C.44) family. 4 C-C subfamily.

The protein localises to the secreted. In terms of biological role, thionins are small plant proteins which are toxic to animal cells. They seem to exert their toxic effect at the level of the cell membrane. Their precise function is not known. The chain is Thionin BTH7 from Hordeum vulgare (Barley).